The chain runs to 470 residues: Ribulose bisphosphate carboxylase large chain (470 aa).

Asn-115 and Thr-165 together coordinate substrate. Lys-167 functions as the Proton acceptor in the catalytic mechanism. Lys-169 serves as a coordination point for substrate. Mg(2+)-binding residues include Lys-193, Asp-195, and Glu-196. N6-carboxylysine is present on Lys-193. His-286 functions as the Proton acceptor in the catalytic mechanism. Substrate contacts are provided by Arg-287, His-319, and Ser-371.

Belongs to the RuBisCO large chain family. Type I subfamily. Heterohexadecamer of 8 large chains and 8 small chains. It depends on Mg(2+) as a cofactor.

The protein localises to the carboxysome. It carries out the reaction 2 (2R)-3-phosphoglycerate + 2 H(+) = D-ribulose 1,5-bisphosphate + CO2 + H2O. The catalysed reaction is D-ribulose 1,5-bisphosphate + O2 = 2-phosphoglycolate + (2R)-3-phosphoglycerate + 2 H(+). Functionally, ruBisCO catalyzes two reactions: the carboxylation of D-ribulose 1,5-bisphosphate, the primary event in carbon dioxide fixation, as well as the oxidative fragmentation of the pentose substrate in the photorespiration process. Both reactions occur simultaneously and in competition at the same active site. The polypeptide is Ribulose bisphosphate carboxylase large chain (Synechococcus sp. (strain CC9311)).